We begin with the raw amino-acid sequence, 927 residues long: Valine--tRNA ligase (927 aa).

The short motif at 45–55 (PNVTGSLHMGH) is the 'HIGH' region element. Positions 571–575 (KMSKS) match the 'KMSKS' region motif. Residue K574 participates in ATP binding. The stretch at 856–917 (SLIDLAAEAA…EYRDAQDKLA (62 aa)) forms a coiled coil.

The protein belongs to the class-I aminoacyl-tRNA synthetase family. ValS type 1 subfamily. As to quaternary structure, monomer.

It is found in the cytoplasm. The enzyme catalyses tRNA(Val) + L-valine + ATP = L-valyl-tRNA(Val) + AMP + diphosphate. Catalyzes the attachment of valine to tRNA(Val). As ValRS can inadvertently accommodate and process structurally similar amino acids such as threonine, to avoid such errors, it has a 'posttransfer' editing activity that hydrolyzes mischarged Thr-tRNA(Val) in a tRNA-dependent manner. This chain is Valine--tRNA ligase, found in Mesorhizobium japonicum (strain LMG 29417 / CECT 9101 / MAFF 303099) (Mesorhizobium loti (strain MAFF 303099)).